A 670-amino-acid chain; its full sequence is DNA ligase (670 aa).

Residues 35–39 (DSVYD), 84–85 (SL), and Glu-116 each bind NAD(+). Residue Lys-118 is the N6-AMP-lysine intermediate of the active site. 4 residues coordinate NAD(+): Arg-139, Glu-176, Lys-293, and Lys-317. Residues Cys-411, Cys-414, Cys-429, and Cys-435 each coordinate Zn(2+). One can recognise a BRCT domain in the interval 592 to 670 (VVKSEIAGKT…EEAFLKLLKS (79 aa)).

The protein belongs to the NAD-dependent DNA ligase family. LigA subfamily. It depends on Mg(2+) as a cofactor. Mn(2+) is required as a cofactor.

It carries out the reaction NAD(+) + (deoxyribonucleotide)n-3'-hydroxyl + 5'-phospho-(deoxyribonucleotide)m = (deoxyribonucleotide)n+m + AMP + beta-nicotinamide D-nucleotide.. DNA ligase that catalyzes the formation of phosphodiester linkages between 5'-phosphoryl and 3'-hydroxyl groups in double-stranded DNA using NAD as a coenzyme and as the energy source for the reaction. It is essential for DNA replication and repair of damaged DNA. The chain is DNA ligase from Coxiella burnetii (strain Dugway 5J108-111).